The sequence spans 963 residues: Iron-responsive element-binding protein 2 (963 aa).

Residues Cys-512, Cys-578, and Cys-581 each coordinate [4Fe-4S] cluster.

It belongs to the aconitase/IPM isomerase family. In terms of assembly, interacts with RBCK1 isoform 1 and isoform 2 only in iron-rich conditions. Interacts (when associated with the 4Fe-4S) with FBXL5. Interacts with CIAO1 and CIAO2A. The cofactor is [4Fe-4S] cluster. In terms of processing, ubiquitinated and degraded by the proteasome in presence of high level of iron and oxygen. Ubiquitinated by a SCF complex containing FBXL5. Upon iron and oxygen depletion FBXL5 is degraded, preventing ubiquitination and allowing its RNA-binding activity.

Its subcellular location is the cytoplasm. Its function is as follows. RNA-binding protein that binds to iron-responsive elements (IRES), which are stem-loop structures found in the 5'-UTR of ferritin, and delta aminolevulinic acid synthase mRNAs, and in the 3'-UTR of transferrin receptor mRNA. Binding to the IRE element in ferritin results in the repression of its mRNA translation. Binding of the protein to the transferrin receptor mRNA inhibits the degradation of this otherwise rapidly degraded mRNA. The protein is Iron-responsive element-binding protein 2 (IREB2) of Homo sapiens (Human).